The following is a 112-amino-acid chain: MMKGGMAGLMKQAQQMQEKMAKMQEELANAEVTGKAGGDLVTVVMTGRHDVKKVSIDPSVLPGLDEDDREVVEDLVAAAVNAAVRQIEANSQAKMGSMTAGMNLPAGMKLPF.

This sequence belongs to the YbaB/EbfC family. As to quaternary structure, homodimer.

It is found in the cytoplasm. It localises to the nucleoid. Its function is as follows. Binds to DNA and alters its conformation. May be involved in regulation of gene expression, nucleoid organization and DNA protection. This Pseudomonas fluorescens (strain Pf0-1) protein is Nucleoid-associated protein Pfl01_1806.